Here is a 585-residue protein sequence, read N- to C-terminus: Pyruvate kinase (585 aa).

A substrate-binding site is contributed by arginine 32. Residues asparagine 34, serine 36, aspartate 66, and threonine 67 each contribute to the K(+) site. ATP is bound at residue 34–37 (NFSH). 2 residues coordinate ATP: arginine 73 and lysine 156. Position 221 (glutamate 221) interacts with Mg(2+). The substrate site is built by glycine 244, aspartate 245, and threonine 277. Aspartate 245 contacts Mg(2+).

Belongs to the pyruvate kinase family. This sequence in the C-terminal section; belongs to the PEP-utilizing enzyme family. Requires Mg(2+) as cofactor. It depends on K(+) as a cofactor.

The catalysed reaction is pyruvate + ATP = phosphoenolpyruvate + ADP + H(+). The protein operates within carbohydrate degradation; glycolysis; pyruvate from D-glyceraldehyde 3-phosphate: step 5/5. The chain is Pyruvate kinase (pyk) from Staphylococcus aureus (strain MRSA252).